The primary structure comprises 352 residues: Carbohydrate sulfotransferase 11 (352 aa).

Topologically, residues 1–16 (MKPALLEVMRMNRICR) are cytoplasmic. The helical; Signal-anchor for type II membrane protein transmembrane segment at 17–37 (MVLATCLGSFILVIFYFQSML) threads the bilayer. Over 38–352 (HPVMRRNPFG…YSVPNYLKLD (315 aa)) the chain is Lumenal. 3'-phosphoadenylyl sulfate contacts are provided by residues 124 to 130 (PKVACTN) and 186 to 194 (REPFERLVS). N205, N223, N321, and N342 each carry an N-linked (GlcNAc...) asparagine glycan.

It belongs to the sulfotransferase 2 family. N-glycosylated; required for activity and stability.

Its subcellular location is the golgi apparatus membrane. It catalyses the reaction chondroitin beta-D-glucuronate + n 3'-phosphoadenylyl sulfate = chondroitin 4'-sulfate + n adenosine 3',5'-bisphosphate + n H(+). Its function is as follows. Catalyzes the transfer of sulfate to position 4 of the N-acetylgalactosamine (GalNAc) residue of chondroitin. Chondroitin sulfate constitutes the predominant proteoglycan present in cartilage and is distributed on the surfaces of many cells and extracellular matrices. Can also sulfate Gal residues in desulfated dermatan sulfate. Preferentially sulfates in GlcA-&gt;GalNAc unit than in IdoA-&gt;GalNAc unit. Does not form 4, 6-di-O-sulfated GalNAc when chondroitin sulfate C is used as an acceptor. The sequence is that of Carbohydrate sulfotransferase 11 (Chst11) from Rattus norvegicus (Rat).